The following is a 33-amino-acid chain: Pheromone biosynthesis-activating neuropeptide (33 aa).

A disordered region spans residues 1-33 (LADDMPATMADQEVYRPEPEQIDSRNKYFSPRL). A compositionally biased stretch (basic and acidic residues) spans 13-26 (EVYRPEPEQIDSRN). Leu-33 is modified (leucine amide).

The protein belongs to the pyrokinin family.

The protein localises to the secreted. Functionally, involved in the control of pheromone production in females. This chain is Pheromone biosynthesis-activating neuropeptide, found in Lymantria dispar (Gypsy moth).